The following is an 89-amino-acid chain: Small ribosomal subunit protein uS15 (89 aa).

The protein belongs to the universal ribosomal protein uS15 family. Part of the 30S ribosomal subunit. Forms a bridge to the 50S subunit in the 70S ribosome, contacting the 23S rRNA.

Its function is as follows. One of the primary rRNA binding proteins, it binds directly to 16S rRNA where it helps nucleate assembly of the platform of the 30S subunit by binding and bridging several RNA helices of the 16S rRNA. In terms of biological role, forms an intersubunit bridge (bridge B4) with the 23S rRNA of the 50S subunit in the ribosome. This chain is Small ribosomal subunit protein uS15, found in Pseudomonas putida (strain ATCC 700007 / DSM 6899 / JCM 31910 / BCRC 17059 / LMG 24140 / F1).